The primary structure comprises 337 residues: Phenylalanine--tRNA ligase alpha subunit (337 aa).

Residue E258 coordinates Mg(2+).

Belongs to the class-II aminoacyl-tRNA synthetase family. Phe-tRNA synthetase alpha subunit type 1 subfamily. Tetramer of two alpha and two beta subunits. Requires Mg(2+) as cofactor.

It localises to the cytoplasm. The catalysed reaction is tRNA(Phe) + L-phenylalanine + ATP = L-phenylalanyl-tRNA(Phe) + AMP + diphosphate + H(+). This chain is Phenylalanine--tRNA ligase alpha subunit, found in Burkholderia mallei (strain ATCC 23344).